The primary structure comprises 1227 residues: Pentatricopeptide repeat-containing protein At5g15280, mitochondrial (1227 aa).

The N-terminal 31 residues, 1–31, are a transit peptide targeting the mitochondrion; that stretch reads MLNLLSISSSSRLRFLNKVSSLTYHYSFAFF. 28 PPR repeats span residues 146–180, 182–216, 217–251, 255–289, 290–320, 322–356, 357–391, 392–426, 427–461, 527–561, 562–597, 598–632, 633–667, 668–698, 703–737, 738–772, 773–800, 802–836, 837–871, 872–906, 908–942, 943–977, 978–1012, 1014–1044, 1047–1081, 1082–1116, 1117–1151, and 1152–1186; these read LPQA…GDTM, NEGI…GLVP, LTSC…RAEL, NIDS…GCIL, NSSI…VKYE, DVFV…GFKQ, DEVT…GYKP, DVYS…GMML, SLST…GLIE, VLPE…GQKL, SRRS…AYQL, DGET…HHPI, DNVT…NWLP, DLND…VFIS, QSEA…GCIV, EQEV…KHIP, SLGS…AEQI, SSYV…GLSS, YNKI…NIIC, SVKS…ESNP, GVII…GVLP, DETT…GMKP, NNRS…GWNL, SSVV…VTRN, MAPN…QSIP, GSSS…GLSP, SIST…GESP, and SQEM…GYEV.

The protein belongs to the PPR family. P subfamily.

It is found in the mitochondrion. In Arabidopsis thaliana (Mouse-ear cress), this protein is Pentatricopeptide repeat-containing protein At5g15280, mitochondrial.